We begin with the raw amino-acid sequence, 223 residues long: MKIFLDTANISEIKEGIDLGLVDGVTTNPTLISKEAGGSKKYAEIIKEILKIVDGPVSVEVVSTKSDGMVEEARKIHALGDNAVVKIPMTDEGLKAIRKLSQENIETNCTLVFNPIQALLAAKSGATYVSPFVGRLDDIGQDGMQIIDEIKTIFNNYIIKTQILVASVRNPIHVLRAAIIGADVVTIPFSVLKLLIKHPKTDEGLTRFLEDWKKVSPDGKFII.

The Schiff-base intermediate with substrate role is filled by Lys-86.

The protein belongs to the transaldolase family. Type 3B subfamily.

The protein resides in the cytoplasm. It catalyses the reaction D-sedoheptulose 7-phosphate + D-glyceraldehyde 3-phosphate = D-erythrose 4-phosphate + beta-D-fructose 6-phosphate. It functions in the pathway carbohydrate degradation; pentose phosphate pathway; D-glyceraldehyde 3-phosphate and beta-D-fructose 6-phosphate from D-ribose 5-phosphate and D-xylulose 5-phosphate (non-oxidative stage): step 2/3. Functionally, transaldolase is important for the balance of metabolites in the pentose-phosphate pathway. In Thermoplasma volcanium (strain ATCC 51530 / DSM 4299 / JCM 9571 / NBRC 15438 / GSS1), this protein is Probable transaldolase (tal).